The chain runs to 308 residues: Formamidopyrimidine-DNA glycosylase (308 aa).

The active-site Schiff-base intermediate with DNA is the Pro-2. Glu-3 functions as the Proton donor in the catalytic mechanism. Lys-61 functions as the Proton donor; for beta-elimination activity in the catalytic mechanism. DNA is bound by residues His-100, Arg-120, and Arg-181. Residues 267–301 (AVYGQEGRPCPRCGALVRRDAFMNRSSFSCPVCQP) form an FPG-type zinc finger. Arg-291 serves as the catalytic Proton donor; for delta-elimination activity.

The protein belongs to the FPG family. In terms of assembly, monomer. The cofactor is Zn(2+).

The enzyme catalyses Hydrolysis of DNA containing ring-opened 7-methylguanine residues, releasing 2,6-diamino-4-hydroxy-5-(N-methyl)formamidopyrimidine.. It carries out the reaction 2'-deoxyribonucleotide-(2'-deoxyribose 5'-phosphate)-2'-deoxyribonucleotide-DNA = a 3'-end 2'-deoxyribonucleotide-(2,3-dehydro-2,3-deoxyribose 5'-phosphate)-DNA + a 5'-end 5'-phospho-2'-deoxyribonucleoside-DNA + H(+). Involved in base excision repair of DNA damaged by oxidation or by mutagenic agents. Acts as a DNA glycosylase that recognizes and removes damaged bases. Has a preference for oxidized purines, such as 7,8-dihydro-8-oxoguanine (8-oxoG). Has AP (apurinic/apyrimidinic) lyase activity and introduces nicks in the DNA strand. Cleaves the DNA backbone by beta-delta elimination to generate a single-strand break at the site of the removed base with both 3'- and 5'-phosphates. This chain is Formamidopyrimidine-DNA glycosylase, found in Kineococcus radiotolerans (strain ATCC BAA-149 / DSM 14245 / SRS30216).